An 886-amino-acid polypeptide reads, in one-letter code: Isoleucine--tRNA ligase (886 aa).

A 'HIGH' region motif is present at residues 60-70 (PYANGDIHIGH). E546 lines the L-isoleucyl-5'-AMP pocket. The 'KMSKS' region signature appears at 587–591 (KMSKS). ATP is bound at residue K590. C856, C859, C870, and C873 together coordinate Zn(2+).

It belongs to the class-I aminoacyl-tRNA synthetase family. IleS type 1 subfamily. As to quaternary structure, monomer. Zn(2+) is required as a cofactor.

The protein resides in the cytoplasm. The catalysed reaction is tRNA(Ile) + L-isoleucine + ATP = L-isoleucyl-tRNA(Ile) + AMP + diphosphate. Functionally, catalyzes the attachment of isoleucine to tRNA(Ile). As IleRS can inadvertently accommodate and process structurally similar amino acids such as valine, to avoid such errors it has two additional distinct tRNA(Ile)-dependent editing activities. One activity is designated as 'pretransfer' editing and involves the hydrolysis of activated Val-AMP. The other activity is designated 'posttransfer' editing and involves deacylation of mischarged Val-tRNA(Ile). The chain is Isoleucine--tRNA ligase from Mesomycoplasma hyopneumoniae (strain 232) (Mycoplasma hyopneumoniae).